Consider the following 306-residue polypeptide: Lipoyl synthase (306 aa).

7 residues coordinate [4Fe-4S] cluster: C52, C57, C63, C78, C82, C85, and S289. Positions 64-278 (WNRKTATYML…KETAYKIGFK (215 aa)) constitute a Radical SAM core domain.

Belongs to the radical SAM superfamily. Lipoyl synthase family. The cofactor is [4Fe-4S] cluster.

The protein resides in the cytoplasm. It catalyses the reaction [[Fe-S] cluster scaffold protein carrying a second [4Fe-4S](2+) cluster] + N(6)-octanoyl-L-lysyl-[protein] + 2 oxidized [2Fe-2S]-[ferredoxin] + 2 S-adenosyl-L-methionine + 4 H(+) = [[Fe-S] cluster scaffold protein] + N(6)-[(R)-dihydrolipoyl]-L-lysyl-[protein] + 4 Fe(3+) + 2 hydrogen sulfide + 2 5'-deoxyadenosine + 2 L-methionine + 2 reduced [2Fe-2S]-[ferredoxin]. It participates in protein modification; protein lipoylation via endogenous pathway; protein N(6)-(lipoyl)lysine from octanoyl-[acyl-carrier-protein]: step 2/2. In terms of biological role, catalyzes the radical-mediated insertion of two sulfur atoms into the C-6 and C-8 positions of the octanoyl moiety bound to the lipoyl domains of lipoate-dependent enzymes, thereby converting the octanoylated domains into lipoylated derivatives. This Leptospira biflexa serovar Patoc (strain Patoc 1 / Ames) protein is Lipoyl synthase.